A 354-amino-acid polypeptide reads, in one-letter code: Alkanal monooxygenase alpha chain (354 aa).

This sequence belongs to the bacterial luciferase oxidoreductase family. In terms of assembly, heterodimer of an alpha and a beta chain.

It carries out the reaction a long-chain fatty aldehyde + FMNH2 + O2 = a long-chain fatty acid + hnu + FMN + H2O + 2 H(+). Light-emitting reaction in luminous bacteria. In Photobacterium leiognathi, this protein is Alkanal monooxygenase alpha chain (luxA).